A 256-amino-acid polypeptide reads, in one-letter code: Pimeloyl-[acyl-carrier protein] methyl ester esterase (256 aa).

The 228-residue stretch at 15–242 (HLVLLHGWGL…AAHAPFISHP (228 aa)) folds into the AB hydrolase-1 domain. Substrate contacts are provided by residues Trp-22, 82–83 (SL), and 143–147 (FLALQ). Catalysis depends on Ser-82, which acts as the Nucleophile. Residues Asp-207 and His-235 contribute to the active site. Residue His-235 participates in substrate binding.

Belongs to the AB hydrolase superfamily. Carboxylesterase BioH family. Monomer.

Its subcellular location is the cytoplasm. The catalysed reaction is 6-carboxyhexanoyl-[ACP] methyl ester + H2O = 6-carboxyhexanoyl-[ACP] + methanol + H(+). It functions in the pathway cofactor biosynthesis; biotin biosynthesis. The physiological role of BioH is to remove the methyl group introduced by BioC when the pimeloyl moiety is complete. It allows to synthesize pimeloyl-ACP via the fatty acid synthetic pathway through the hydrolysis of the ester bonds of pimeloyl-ACP esters. The protein is Pimeloyl-[acyl-carrier protein] methyl ester esterase of Shigella boydii serotype 4 (strain Sb227).